The sequence spans 179 residues: Inosine/xanthosine triphosphatase (179 aa).

8 to 13 (TTNPAK) is a substrate binding site. 2 residues coordinate Mg(2+): aspartate 38 and glutamate 68. Residue 68–69 (EA) coordinates substrate.

It belongs to the YjjX NTPase family. In terms of assembly, homodimer. Requires Mg(2+) as cofactor. Mn(2+) is required as a cofactor.

It catalyses the reaction XTP + H2O = XDP + phosphate + H(+). The enzyme catalyses ITP + H2O = IDP + phosphate + H(+). In terms of biological role, phosphatase that hydrolyzes non-canonical purine nucleotides such as XTP and ITP to their respective diphosphate derivatives. Probably excludes non-canonical purines from DNA/RNA precursor pool, thus preventing their incorporation into DNA/RNA and avoiding chromosomal lesions. The sequence is that of Inosine/xanthosine triphosphatase from Pectobacterium carotovorum subsp. carotovorum (strain PC1).